A 314-amino-acid chain; its full sequence is Olfactory receptor 5B3 (314 aa).

At 1 to 23 (MENKTEVTQFILLGLTNDSELQV) the chain is on the extracellular side. 2 N-linked (GlcNAc...) asparagine glycosylation sites follow: asparagine 3 and asparagine 17. Residues 24–44 (PLFITFPFIYIITLVGNLGII) form a helical membrane-spanning segment. Residues 45 to 52 (VLIFWDSC) lie on the Cytoplasmic side of the membrane. A helical transmembrane segment spans residues 53–73 (LHNPMYFFLSNLSLVDFCYSS). The Extracellular portion of the chain corresponds to 74-97 (AVTPIVMAGFLIEDKVISYNACAA). A disulfide bond links cysteine 95 and cysteine 187. A helical transmembrane segment spans residues 98-118 (QMYIFVAFATVENYLLASMAY). Topologically, residues 119 to 131 (DRYAAVCKPLHYT) are cytoplasmic. A helical transmembrane segment spans residues 132–152 (TTMTTTVCARLAIGSYLCGFL). N-linked (GlcNAc...) asparagine glycosylation is present at asparagine 153. Topologically, residues 153 to 194 (NASIHTGDTFSLSFCKSNEVHHFFCDIPAVMVLSCSDRHISE) are extracellular. Residues 195–215 (LVLIYVVSFNIFIALLVILIS) traverse the membrane as a helical segment. Topologically, residues 216-235 (YTFIFITILKMHSASVYQKP) are cytoplasmic. The helical transmembrane segment at 236-256 (LSTCASHFIAVGIFYGTIIFM) threads the bilayer. Topologically, residues 257–269 (YLQPSSSHSMDTD) are extracellular. A helical transmembrane segment spans residues 270 to 290 (KMAPVFYTMVIPMLNPLVYSL). At 291-314 (RNKEVKSAFKKVVEKAKLSVGWSV) the chain is on the cytoplasmic side.

The protein belongs to the G-protein coupled receptor 1 family.

It is found in the cell membrane. Functionally, odorant receptor. The polypeptide is Olfactory receptor 5B3 (OR5B3) (Homo sapiens (Human)).